Reading from the N-terminus, the 367-residue chain is Cobalt-precorrin-5B C(1)-methyltransferase (367 aa).

This sequence belongs to the CbiD family.

It catalyses the reaction Co-precorrin-5B + S-adenosyl-L-methionine = Co-precorrin-6A + S-adenosyl-L-homocysteine. Its pathway is cofactor biosynthesis; adenosylcobalamin biosynthesis; cob(II)yrinate a,c-diamide from sirohydrochlorin (anaerobic route): step 6/10. Catalyzes the methylation of C-1 in cobalt-precorrin-5B to form cobalt-precorrin-6A. This Priestia megaterium (Bacillus megaterium) protein is Cobalt-precorrin-5B C(1)-methyltransferase.